The chain runs to 504 residues: Plasma protease C1 inhibitor (504 aa).

The signal sequence occupies residues 1–22; the sequence is MASKLTPLTLLLLLLAGDRAFS. The interval 23–75 is disordered; that stretch reads DSEVTSHSSQDPLVVQEGSRDSVPERDGSRSPIEHTGQSSTWPTTSGSTKISN. Residues 24-33 show a composition bias toward polar residues; that stretch reads SEVTSHSSQD. Over residues 40-55 the composition is skewed to basic and acidic residues; it reads GSRDSVPERDGSRSPI. Positions 58 to 75 are enriched in polar residues; that stretch reads TGQSSTWPTTSGSTKISN. Asn-75, Asn-83, Asn-107, Asn-243, and Asn-356 each carry an N-linked (GlcNAc...) asparagine glycan. The segment at 94–132 is disordered; sequence AQLPEDSPSQSPVNSSSPPSTASAPPTQAPTEPLCPEPL. Residues 100-125 show a composition bias toward low complexity; it reads SPSQSPVNSSSPPSTASAPPTQAPTE.

It belongs to the serpin family. In terms of assembly, interacts with MASP1.

It is found in the secreted. Functionally, serine protease inhibitor, which acrs as a regulator of the classical complement pathway. Forms a proteolytically inactive stoichiometric complex with the C1r or C1s proteases. May also regulate blood coagulation, fibrinolysis and the generation of kinins. Very efficient inhibitor of FXIIa. Inhibits chymotrypsin and kallikrein. This is Plasma protease C1 inhibitor (Serping1) from Rattus norvegicus (Rat).